The chain runs to 113 residues: Replication initiation control protein YabA (113 aa).

H88, C90, C104, and C107 together coordinate Zn(2+).

It belongs to the YabA family. In terms of assembly, homotetramer. Interacts with both DnaA and DnaN, acting as a bridge between these two proteins. It depends on Zn(2+) as a cofactor.

It is found in the cytoplasm. It localises to the nucleoid. Functionally, involved in control of chromosome replication initiation. Inhibits the cooperative binding of DnaA to the oriC region, thus negatively regulating initiation of chromosome replication. Inhibits the ability of DnaA-ATP to form a helix on DNA; does not disassemble preformed DnaA-DNA helices. Decreases the residence time of DnaA on the chromosome at its binding sites (oriC, replication forks and promoter-binding sites). Tethers DnaA to the replication machinery via the DNA polymerase beta sliding clamp subunit (dnaN). Associates with oriC and other DnaA targets on the chromosome in a DnaA-dependent manner. This Staphylococcus saprophyticus subsp. saprophyticus (strain ATCC 15305 / DSM 20229 / NCIMB 8711 / NCTC 7292 / S-41) protein is Replication initiation control protein YabA.